The chain runs to 546 residues: ATP synthase subunit alpha (546 aa).

Residue 172–179 (GDRKTGKT) participates in ATP binding.

Belongs to the ATPase alpha/beta chains family. As to quaternary structure, F-type ATPases have 2 components, CF(1) - the catalytic core - and CF(0) - the membrane proton channel. CF(1) has five subunits: alpha(3), beta(3), gamma(1), delta(1), epsilon(1). CF(0) has three main subunits: a(1), b(2) and c(9-12). The alpha and beta chains form an alternating ring which encloses part of the gamma chain. CF(1) is attached to CF(0) by a central stalk formed by the gamma and epsilon chains, while a peripheral stalk is formed by the delta and b chains.

It is found in the cell membrane. The catalysed reaction is ATP + H2O + 4 H(+)(in) = ADP + phosphate + 5 H(+)(out). Functionally, produces ATP from ADP in the presence of a proton gradient across the membrane. The alpha chain is a regulatory subunit. The sequence is that of ATP synthase subunit alpha from Corynebacterium efficiens (strain DSM 44549 / YS-314 / AJ 12310 / JCM 11189 / NBRC 100395).